The following is a 485-amino-acid chain: Serine/threonine-protein kinase 4 (485 aa).

Residues 30-281 enclose the Protein kinase domain; the sequence is FDVLEKLGEG…ATELLQHPFI (252 aa). Residues 36–44 and K59 contribute to the ATP site; that span reads LGEGSYGSV. D149 functions as the Proton acceptor in the catalytic mechanism. Position 183 is a phosphothreonine; by autocatalysis (T183). Residues 287–313 are a coiled coil; it reads ESILRHLINEAQDAKLKRTELKQREVE. The 48-residue stretch at 431 to 478 folds into the SARAH domain; the sequence is YSFLKDWSVTELQLRLNSLDPMMEQEIEEIHHKYQAKRQPILEAIESK.

It belongs to the protein kinase superfamily. STE Ser/Thr protein kinase family. STE20 subfamily. Homodimer; mediated via the coiled-coil region. Requires Mg(2+) as cofactor. Autophosphorylated on Thr-183. In terms of processing, proteolytically cleaved by caspase-3 during apoptosis at Asp-326 resulting in a 37 kDa form. Proteolytic cleavage results in kinase activation and nuclear translocation of the truncated form (MST1/N).

The protein localises to the cytoplasm. Its subcellular location is the nucleus. It carries out the reaction L-seryl-[protein] + ATP = O-phospho-L-seryl-[protein] + ADP + H(+). The enzyme catalyses L-threonyl-[protein] + ATP = O-phospho-L-threonyl-[protein] + ADP + H(+). The C-terminal non-catalytic region inhibits the kinase activity, the enzyme is activated by caspase-cleavage. Homodimerization and autophosphorylation of Thr-183 is also required for full activation. Stress-activated, pro-apoptotic kinase which, following caspase-cleavage, enters the nucleus and induces chromatin condensation followed by internucleosomal DNA fragmentation. Key component of the Hippo signaling pathway which plays a pivotal role in organ size control and tumor suppression by restricting proliferation and promoting apoptosis. The core of this pathway is composed of a kinase cascade wherein stk3/mst2 and stk4/mst1, in complex with its regulatory protein sav1, phosphorylates and activates lats1/2 in complex with its regulatory protein mob1, which in turn phosphorylates and inactivates yap1 oncoprotein and wwtr1/taz. Phosphorylation of yap1 by lats2 inhibits its translocation into the nucleus to regulate cellular genes important for cell proliferation, cell death, and cell migration. Phosphorylates 'Ser-14' of histone H2B (H2BS14ph) during apoptosis. This Xenopus tropicalis (Western clawed frog) protein is Serine/threonine-protein kinase 4 (stk4).